The chain runs to 574 residues: E3 ubiquitin-protein ligase TRIM23 (574 aa).

An RING-type; degenerate zinc finger spans residues 31-76; the sequence is CGVCEDVFSLQGDKVPRLLLCGHTVCHDCLTRLPLHGRAIRCPFDR. A B box-type; degenerate zinc finger spans residues 122 to 168; the sequence is ESIIRCDEDEAHVASVYCTVCATHLCSDCSQVTHSTKTLAKHRRVPL. Positions 352–379 form a coiled coil; that stretch reads RVVLAKQEITRLLETLQKQQQQFTEVAD. The interval 390–574 is ARF-like; it reads TFTKDNRVHI…LVAAGVLDVA (185 aa). Residues 411–418, 454–458, and 513–516 contribute to the GTP site; these read GLDGAGKT, DVGGK, and NKQD.

The protein in the C-terminal section; belongs to the small GTPase superfamily. Arf family. In terms of assembly, homodimer. Interacts with PSCD1. Interacts with UBE2D2. Interacts with TBK1 (via N-terminal kinase domain) and p62/SQSTM1.

The protein resides in the cytoplasm. The protein localises to the endomembrane system. It is found in the golgi apparatus membrane. It localises to the lysosome membrane. The catalysed reaction is S-ubiquitinyl-[E2 ubiquitin-conjugating enzyme]-L-cysteine + [acceptor protein]-L-lysine = [E2 ubiquitin-conjugating enzyme]-L-cysteine + N(6)-ubiquitinyl-[acceptor protein]-L-lysine.. It participates in protein modification; protein ubiquitination. Its function is as follows. Acts as an E3 ubiquitin-protein ligase. Plays an essential role in autophagy activation during viral infection. Mechanistically, activates TANK-binding kinase 1/TBK1 by facilitating its dimerization and ability to phosphorylate the selective autophagy receptor SQSTM1. In order to achieve this function, TRIM23 mediates 'Lys-27'-linked auto-ubiquitination of its ADP-ribosylation factor (ARF) domain to induce its GTPase activity and its recruitment to autophagosomes. This is E3 ubiquitin-protein ligase TRIM23 (Trim23) from Mus musculus (Mouse).